The following is a 91-amino-acid chain: Small ribosomal subunit protein uS19 (91 aa).

This sequence belongs to the universal ribosomal protein uS19 family.

Functionally, protein S19 forms a complex with S13 that binds strongly to the 16S ribosomal RNA. This chain is Small ribosomal subunit protein uS19, found in Fusobacterium nucleatum subsp. nucleatum (strain ATCC 25586 / DSM 15643 / BCRC 10681 / CIP 101130 / JCM 8532 / KCTC 2640 / LMG 13131 / VPI 4355).